A 182-amino-acid polypeptide reads, in one-letter code: Large ribosomal subunit protein uL5 (182 aa).

The protein belongs to the universal ribosomal protein uL5 family. Part of the 50S ribosomal subunit; part of the 5S rRNA/L5/L18/L25 subcomplex. Contacts the 5S rRNA and the P site tRNA. Forms a bridge to the 30S subunit in the 70S ribosome.

In terms of biological role, this is one of the proteins that bind and probably mediate the attachment of the 5S RNA into the large ribosomal subunit, where it forms part of the central protuberance. In the 70S ribosome it contacts protein S13 of the 30S subunit (bridge B1b), connecting the 2 subunits; this bridge is implicated in subunit movement. Contacts the P site tRNA; the 5S rRNA and some of its associated proteins might help stabilize positioning of ribosome-bound tRNAs. The chain is Large ribosomal subunit protein uL5 from Borrelia garinii subsp. bavariensis (strain ATCC BAA-2496 / DSM 23469 / PBi) (Borreliella bavariensis).